The following is a 318-amino-acid chain: Transaldolase (318 aa).

The active-site Schiff-base intermediate with substrate is Lys-132.

It belongs to the transaldolase family. Type 1 subfamily. As to quaternary structure, homodimer.

Its subcellular location is the cytoplasm. It carries out the reaction D-sedoheptulose 7-phosphate + D-glyceraldehyde 3-phosphate = D-erythrose 4-phosphate + beta-D-fructose 6-phosphate. Its pathway is carbohydrate degradation; pentose phosphate pathway; D-glyceraldehyde 3-phosphate and beta-D-fructose 6-phosphate from D-ribose 5-phosphate and D-xylulose 5-phosphate (non-oxidative stage): step 2/3. In terms of biological role, transaldolase is important for the balance of metabolites in the pentose-phosphate pathway. This chain is Transaldolase, found in Shewanella piezotolerans (strain WP3 / JCM 13877).